The chain runs to 105 residues: Large ribosomal subunit protein bL21 (105 aa).

The protein belongs to the bacterial ribosomal protein bL21 family. Part of the 50S ribosomal subunit. Contacts protein L20.

Its function is as follows. This protein binds to 23S rRNA in the presence of protein L20. This is Large ribosomal subunit protein bL21 from Frankia casuarinae (strain DSM 45818 / CECT 9043 / HFP020203 / CcI3).